The primary structure comprises 218 residues: Uracil-DNA glycosylase (218 aa).

D68 functions as the Proton acceptor in the catalytic mechanism.

The protein belongs to the uracil-DNA glycosylase (UDG) superfamily. UNG family. As to quaternary structure, homodimer. Interacts with protein OPG148. Component of the Uracil-DNA glycosylase(UDG)-OPG148-polymerase complex; OPG148 and UDG form a heterodimeric processivity factor that associates with OPG71 to form the processive polymerase holoenzyme.

It catalyses the reaction Hydrolyzes single-stranded DNA or mismatched double-stranded DNA and polynucleotides, releasing free uracil.. Its function is as follows. Plays an essential role in viral replication as a component of the DNA polymerase processivity factor. Excises uracil residues from the DNA which can arise as a result of misincorporation of dUMP residues by DNA polymerase or due to deamination of cytosine. The protein is Uracil-DNA glycosylase (OPG116) of Bos taurus (Bovine).